The chain runs to 420 residues: Probable glycosyltransferase YdaM (420 aa).

Helical transmembrane passes span 4–24 (TLFF…MFLM), 299–319 (IIFD…GVIM), 332–352 (LHLS…FLFM), and 371–391 (FFIV…LVIY).

This sequence belongs to the glycosyltransferase 2 family.

The protein resides in the cell membrane. In Bacillus subtilis (strain 168), this protein is Probable glycosyltransferase YdaM (ydaM).